A 115-amino-acid polypeptide reads, in one-letter code: uncharacterized protein (115 aa).

Positions 1-20 are cleaved as a signal peptide; sequence MKTFFRTVLFGSLMAVCANS.

This is an uncharacterized protein from Escherichia coli O6:H1 (strain CFT073 / ATCC 700928 / UPEC).